Reading from the N-terminus, the 217-residue chain is Protein GrpE (217 aa).

The tract at residues 1–63 (MAETSNSENK…AADSELSLQS (63 aa)) is disordered. A compositionally biased stretch (basic and acidic residues) spans 10–32 (KTSEEAKASEKNSRSITLEETKL). Residues 37 to 63 (SEESTQTTESTQAQAAEAADSELSLQS) are compositionally biased toward low complexity.

Belongs to the GrpE family. Homodimer.

It is found in the cytoplasm. Its function is as follows. Participates actively in the response to hyperosmotic and heat shock by preventing the aggregation of stress-denatured proteins, in association with DnaK and GrpE. It is the nucleotide exchange factor for DnaK and may function as a thermosensor. Unfolded proteins bind initially to DnaJ; upon interaction with the DnaJ-bound protein, DnaK hydrolyzes its bound ATP, resulting in the formation of a stable complex. GrpE releases ADP from DnaK; ATP binding to DnaK triggers the release of the substrate protein, thus completing the reaction cycle. Several rounds of ATP-dependent interactions between DnaJ, DnaK and GrpE are required for fully efficient folding. In Leptospira borgpetersenii serovar Hardjo-bovis (strain JB197), this protein is Protein GrpE.